The sequence spans 118 residues: MPRVKGGTVTRARRKKTIKLAKGYFGSKHTLYKVAKQQVMKSGQYAYRDRRQKKREFRKLWIARINAAARQHDISYSRLMNGLKVAGIDVNRKMLSEIAISDEKAFAELVNQAKAALK.

This sequence belongs to the bacterial ribosomal protein bL20 family.

In terms of biological role, binds directly to 23S ribosomal RNA and is necessary for the in vitro assembly process of the 50S ribosomal subunit. It is not involved in the protein synthesizing functions of that subunit. In Macrococcus caseolyticus (strain JCSC5402) (Macrococcoides caseolyticum), this protein is Large ribosomal subunit protein bL20.